The primary structure comprises 274 residues: Cytochrome c oxidase subunit 3 (274 aa).

Topologically, residues 2–15 (AHVKNHDYQILPPS) are cytoplasmic. The helical transmembrane segment at 16-36 (IWPFFGAIGAFVMLTGAVAWM) threads the bilayer. Over 37–48 (KGITFFGLPVEG) the chain is Periplasmic. The chain crosses the membrane as a helical span at residues 49–77 (PWMFLIGLVGVLYVMFGWWADVVNEGETG). At 78-79 (EH) the chain is on the cytoplasmic side. The chain crosses the membrane as a helical span at residues 80–115 (TPVVRIGLQYGFILFIMSEVMFFVAWFWAFIKNALY). The Periplasmic segment spans residues 116 to 139 (PMGPDSPIKDGVWPPEGIVTFDPW). Residues 140-166 (HLPLINTLILLLSGVAVTWAHHAFVLE) traverse the membrane as a helical segment. The Cytoplasmic portion of the chain corresponds to 167–168 (GD). A helical transmembrane segment spans residues 169-197 (RKTTINGLIVAVILGVCFTGLQAYEYSHA). The Periplasmic segment spans residues 198–203 (AFGLAD). The helical transmembrane segment at 204–237 (TVYAGAFYMATGFHGAHVIIGTIFLFVCLIRLLK) threads the bilayer. At 238–244 (GQMTQKQ) the chain is on the cytoplasmic side. A helical membrane pass occupies residues 245–274 (HVGFEAAAWYWHFVDVVWLFLFVVIYIWGR).

It belongs to the cytochrome c oxidase subunit 3 family.

It is found in the cell inner membrane. It carries out the reaction 4 Fe(II)-[cytochrome c] + O2 + 8 H(+)(in) = 4 Fe(III)-[cytochrome c] + 2 H2O + 4 H(+)(out). The protein is Cytochrome c oxidase subunit 3 (ctaE) of Paracoccus denitrificans.